The following is a 543-amino-acid chain: Zinc finger protein tra-4 (543 aa).

A disordered region spans residues 1–38 (MDDPNQCTIKQEDSITRPRPTEAPTIQNLKQEPAIEEG). Residues 10-20 (KQEDSITRPRP) show a composition bias toward basic and acidic residues. 7 C2H2-type zinc fingers span residues 218–241 (VRCK…RDKH), 327–350 (PQCP…AKKH), 381–406 (YVCF…KKFH), 413–436 (FRCS…KMSH), 442–464 (FQCH…ERMH), 470–493 (FECK…RDEH), and 495–518 (YVCA…YEEH).

Belongs to the krueppel C2H2-type zinc-finger protein family. As to quaternary structure, interacts with histone deacetylase hda-1. May interact with nasp-1.

It localises to the nucleus. In terms of biological role, probable transcription factor. Promotes normal hermaphrodite (XX) development, in concert with histone deacetylase hda-1 and nasp-1, perhaps as components of a complex. May cooperate with transcription factor tra-1 to repress male-specific genes in hermaphrodites. Synthetic multivulva (synMuv) class B protein, required to repress the induction of vulval development by let-60 Ras signaling. The polypeptide is Zinc finger protein tra-4 (Caenorhabditis elegans).